A 1296-amino-acid polypeptide reads, in one-letter code: Histone-lysine N-methyltransferase EHMT1 (1296 aa).

Disordered regions lie at residues 1–111 (MAAA…NHVT) and 170–200 (PQTP…TDVR). Ala-2 carries the post-translational modification N-acetylalanine. Residues 14–31 (QETKQDCCMKTELLREDT) are compositionally biased toward basic and acidic residues. Residue Lys-23 forms a Glycyl lysine isopeptide (Lys-Gly) (interchain with G-Cter in SUMO1); alternate linkage. Lys-23 participates in a covalent cross-link: Glycyl lysine isopeptide (Lys-Gly) (interchain with G-Cter in SUMO2); alternate. Residues 77 to 89 (NTRASPQEGTNRV) are compositionally biased toward polar residues. Residues 97-106 (VSERDTEVGK) show a composition bias toward basic and acidic residues. Residues Lys-191, Lys-229, Lys-232, Lys-315, and Lys-325 each participate in a glycyl lysine isopeptide (Lys-Gly) (interchain with G-Cter in SUMO2) cross-link. The interval 341 to 470 (SLEMDSEDED…SSPGSMEQAA (130 aa)) is disordered. Residues 342–360 (LEMDSEDEDSDELEDDEDH) show a composition bias toward acidic residues. Over residues 371–391 (EDSRTSKESMSETDRAAKMDG) the composition is skewed to basic and acidic residues. Residues 392-414 (DSEEEQESPDTGEDEDGGDESDL) show a composition bias toward acidic residues. Lys-430 participates in a covalent cross-link: Glycyl lysine isopeptide (Lys-Gly) (interchain with G-Cter in SUMO2). Residue Ser-433 is modified to Phosphoserine. Positions 438–450 (PARKRRRRSRKKP) are enriched in basic residues. Ser-481 carries the phosphoserine modification. Glycyl lysine isopeptide (Lys-Gly) (interchain with G-Cter in SUMO2) cross-links involve residues Lys-559, Lys-644, Lys-659, and Lys-729. A disordered region spans residues 653–714 (LAPGQEKSLA…PTSGLSQGPG (62 aa)). ANK repeat units follow at residues 735–764 (FHPK…DPNF), 770–799 (SKRS…NIDT), 803–832 (DQRT…QVDP), 836–866 (EGST…DVNC), 870–899 (GGWT…DINI), 903–932 (EENI…DLHA), 936–965 (HGDS…DVTL), and 969–1002 (EGET…DKPV). The segment at 903–905 (EEN) is histone H3K9me binding. Residue Ser-1046 is modified to Phosphoserine. One can recognise a Pre-SET domain in the interval 1058 to 1121 (QYCVCVDDCS…NCRNRVVQNG (64 aa)). 9 residues coordinate Zn(2+): Cys-1060, Cys-1062, Cys-1066, Cys-1071, Cys-1073, Cys-1103, Cys-1107, Cys-1109, and Cys-1113. An SET domain is found at 1124 to 1241 (ARLQLYRTQD…AGEQLGFDYG (118 aa)). S-adenosyl-L-methionine-binding positions include 1134–1136 (MGW), Tyr-1171, and 1198–1199 (NH). Residues 1160–1179 (DSEADVREEDSYLFDLDNKD) form an interaction with histone H3 region. Residue Cys-1201 coordinates Zn(2+). The segment at 1240–1243 (YGER) is interaction with histone H3. Cys-1254 serves as a coordination point for Zn(2+). Residue Arg-1255 participates in S-adenosyl-L-methionine binding. 2 residues coordinate Zn(2+): Cys-1256 and Cys-1261. Residues 1271-1296 (RQASAAQEPQENGLPDTSSAAAADPL) form a disordered region.

The protein belongs to the class V-like SAM-binding methyltransferase superfamily. As to quaternary structure, interacts with WIZ. Part of the E2F6.com-1 complex in G0 phase composed of E2F6, MGA, MAX, TFDP1, CBX3, BAT8, EHMT1, RING1, RNF2, MBLR, L3MBTL2 and YAF2. Interacts with MPHOSPH8. Interacts with CDYL. Interacts with REST only in the presence of CDYL. Part of a complex containing at least CDYL, REST, WIZ, SETB1, EHMT1 and EHMT2. Heterodimer; heterodimerizes with EHMT2. Interacts (via ANK repeats) with RELA (when monomethylated at 'Lys-310'). Interacts with Baz2b. As to expression, ubiquitous.

The protein localises to the nucleus. It is found in the chromosome. The catalysed reaction is N(6)-methyl-L-lysyl(9)-[histone H3] + S-adenosyl-L-methionine = N(6),N(6)-dimethyl-L-lysyl(9)-[histone H3] + S-adenosyl-L-homocysteine + H(+). It catalyses the reaction L-lysyl(9)-[histone H3] + S-adenosyl-L-methionine = N(6)-methyl-L-lysyl(9)-[histone H3] + S-adenosyl-L-homocysteine + H(+). Its activity is regulated as follows. Methyltransferase activity is inhibited by BIX-01294. Efficiently inhibited by compound E72, a BIX-01294 derivative in which the diazepane ring and the benzyl are replaced with a 3-dimethylaminopropyl and a 5-aminopentyl group at sites B and C, respectively. Functionally, histone methyltransferase that specifically mono- and dimethylates 'Lys-9' of histone H3 (H3K9me1 and H3K9me2, respectively) in euchromatin. H3K9me represents a specific tag for epigenetic transcriptional repression by recruiting HP1 proteins to methylated histones. Also weakly methylates 'Lys-27' of histone H3 (H3K27me). Also required for DNA methylation, the histone methyltransferase activity is not required for DNA methylation, suggesting that these 2 activities function independently. Probably targeted to histone H3 by different DNA-binding proteins like E2F6, MGA, MAX and/or DP1. During G0 phase, it probably contributes to silencing of MYC- and E2F-responsive genes, suggesting a role in G0/G1 transition in cell cycle. In addition to the histone methyltransferase activity, also methylates non-histone proteins: mediates dimethylation of 'Lys-373' of p53/TP53. Represses the expression of mitochondrial function-related genes, perhaps by occupying their promoter regions, working in concert with probable chromatin reader Baz2b. This Mus musculus (Mouse) protein is Histone-lysine N-methyltransferase EHMT1 (Ehmt1).